Here is a 722-residue protein sequence, read N- to C-terminus: MYRYFATTARGLEPALAAELKRMGAKSVRPASAGVGFEGDLEIGLRACLWSRVATRIILSLKKIDVSTPEALYASVLEIPWEDHLDAEGTLSVDCIGTNDTIRHTNFGGQKLKDAVVDRIRDKKGSRPSVARERPDLRINLGIRGNEGRVGIDLSGEGLHRRGYRLRTGDAPLKENLAAALLYFAGWEEQARLGAPFVDPMCGSGTLPIEAAMMAGDIAPGSLRRYFGFRRWRGASGIAELWQRLADESIERQNQAKMPIIEAGDSDANMVHIAQANIEEAELEGHIRLHQRDVAAWQKGADWPDRPGVLVTNPPYGERLGEVVELKGLFAKLGMLLNGPLLGWRSGVLMGDVLWQSAMGLPQQGQRMDLNNGPIPCAYILHGTEPKPQAAKGAPAPKPGLQQGVVSPENAQMFANRLKKNQKRLKKWVTRENVRCYRLYDADMPEYALAVDRYEEWVVVQEYQAPSSIPDADAHRRLQDACSVLPEVLGVPPERVVVKQRKRQKGYNQYDKMANRGQKVLVAEQGLNFEVNLTDYLDTGLFPDHAPMRRRIQQEAANRRFLNLFCYTGTATVHAAAGGALTTTSVDLSNTYLEWAQRNMELNGFKGEHQHRFIKANCMQWIATTDQTFDLIFLDPPTFSNSKSMLESFDIQRDQVTLIGGVARLLNPDGVLYFSTNRKKFKLEQDLLSAQNLHMEEITQQTLDPDFHREPPIHRCWRITCA.

Residues 43-154 (IGLRACLWSR…GNEGRVGIDL (112 aa)) enclose the THUMP domain.

Belongs to the methyltransferase superfamily. RlmKL family.

The protein localises to the cytoplasm. The enzyme catalyses guanosine(2445) in 23S rRNA + S-adenosyl-L-methionine = N(2)-methylguanosine(2445) in 23S rRNA + S-adenosyl-L-homocysteine + H(+). It catalyses the reaction guanosine(2069) in 23S rRNA + S-adenosyl-L-methionine = N(2)-methylguanosine(2069) in 23S rRNA + S-adenosyl-L-homocysteine + H(+). Specifically methylates the guanine in position 2445 (m2G2445) and the guanine in position 2069 (m7G2069) of 23S rRNA. This is Ribosomal RNA large subunit methyltransferase K/L from Magnetococcus marinus (strain ATCC BAA-1437 / JCM 17883 / MC-1).